The primary structure comprises 478 residues: Transposase for insertion sequence element IS231C (478 aa).

This sequence belongs to the transposase 11 family.

Involved in the transposition of the insertion sequence. The polypeptide is Transposase for insertion sequence element IS231C (Bacillus thuringiensis subsp. berliner).